A 229-amino-acid chain; its full sequence is Protein-L-isoaspartate O-methyltransferase (229 aa).

Ser-65 is a catalytic residue.

This sequence belongs to the methyltransferase superfamily. L-isoaspartyl/D-aspartyl protein methyltransferase family.

The protein localises to the cytoplasm. The catalysed reaction is [protein]-L-isoaspartate + S-adenosyl-L-methionine = [protein]-L-isoaspartate alpha-methyl ester + S-adenosyl-L-homocysteine. Its function is as follows. Catalyzes the methyl esterification of L-isoaspartyl residues in peptides and proteins that result from spontaneous decomposition of normal L-aspartyl and L-asparaginyl residues. It plays a role in the repair and/or degradation of damaged proteins. This chain is Protein-L-isoaspartate O-methyltransferase, found in Chlorobium phaeovibrioides (strain DSM 265 / 1930) (Prosthecochloris vibrioformis (strain DSM 265)).